The following is a 211-amino-acid chain: FMN-dependent NADH:quinone oxidoreductase 2 (211 aa).

FMN is bound by residues Ser10 and 17-19 (SRS).

The protein belongs to the azoreductase type 1 family. In terms of assembly, homodimer. It depends on FMN as a cofactor.

The catalysed reaction is 2 a quinone + NADH + H(+) = 2 a 1,4-benzosemiquinone + NAD(+). It carries out the reaction N,N-dimethyl-1,4-phenylenediamine + anthranilate + 2 NAD(+) = 2-(4-dimethylaminophenyl)diazenylbenzoate + 2 NADH + 2 H(+). Functionally, quinone reductase that provides resistance to thiol-specific stress caused by electrophilic quinones. In terms of biological role, also exhibits azoreductase activity. Catalyzes the reductive cleavage of the azo bond in aromatic azo compounds to the corresponding amines. The protein is FMN-dependent NADH:quinone oxidoreductase 2 of Listeria innocua serovar 6a (strain ATCC BAA-680 / CLIP 11262).